The primary structure comprises 347 residues: N6-Methyl-AMP deaminase-L (347 aa).

Zn(2+) contacts are provided by histidine 19 and histidine 21. N(6)-methyl-AMP is bound by residues histidine 21, asparagine 23, histidine 69, 101-104 (STPR), aspartate 142, and glycine 175. Histidine 202 provides a ligand contact to Zn(2+). Positions 205, 283, and 284 each coordinate N(6)-methyl-AMP. The active-site Proton donor is glutamate 205. Residue aspartate 283 participates in Zn(2+) binding.

It belongs to the metallo-dependent hydrolases superfamily. Adenosine and AMP deaminases family. As to quaternary structure, monomer. Zn(2+) serves as cofactor.

The catalysed reaction is N(6)-methyl-AMP + H2O + H(+) = IMP + methylamine. Catalyzes the hydrolysis of the free cytosolic methylated adenosine nucleotide N(6)-methyl-AMP (N6-mAMP) to produce inositol monophosphate (IMP) and methylamine. Is required for the catabolism of cytosolic N6-mAMP, which is derived from the degradation of mRNA containing N6-methylated adenine (m6A). The sequence is that of N6-Methyl-AMP deaminase-L (mapda.L) from Xenopus laevis (African clawed frog).